A 761-amino-acid polypeptide reads, in one-letter code: Mitochondrial intermediate peptidase (761 aa).

The N-terminal 37 residues, 1–37 (MLIQKILLNKEISRLPRILSILNYTGLRWLSGSSGRN), are a transit peptide targeting the mitochondrion. Zn(2+) is bound at residue histidine 547. Glutamate 548 is an active-site residue. 2 residues coordinate Zn(2+): histidine 551 and histidine 554.

This sequence belongs to the peptidase M3 family. It depends on Zn(2+) as a cofactor.

The protein resides in the mitochondrion matrix. The enzyme catalyses Release of an N-terminal octapeptide as second stage of processing of some proteins imported into the mitochondrion.. Functionally, cleaves proteins, imported into the mitochondrion, to their mature size. While most mitochondrial precursor proteins are processed to the mature form in one step by mitochondrial processing peptidase (MPP), the sequential cleavage by MIP of an octapeptide after initial processing by MPP is a required step for a subgroup of nuclear-encoded precursor proteins destined for the matrix or the inner membrane. The protein is Mitochondrial intermediate peptidase (OCT1) of Candida glabrata (strain ATCC 2001 / BCRC 20586 / JCM 3761 / NBRC 0622 / NRRL Y-65 / CBS 138) (Yeast).